A 322-amino-acid chain; its full sequence is Probable ATP-dependent 6-phosphofructokinase (322 aa).

Residues G11, 72–73, and 102–105 each bind ATP; these read RF and GDGS. D103 provides a ligand contact to Mg(2+). Residues 125-127, 169-171, E222, K249, and 255-258 each bind substrate; these read TID, MGR, and YLQR. Catalysis depends on D127, which acts as the Proton acceptor.

It belongs to the phosphofructokinase type A (PFKA) family. As to quaternary structure, homotetramer. Requires Mg(2+) as cofactor.

The protein resides in the cytoplasm. The catalysed reaction is beta-D-fructose 6-phosphate + ATP = beta-D-fructose 1,6-bisphosphate + ADP + H(+). Its pathway is carbohydrate degradation; glycolysis; D-glyceraldehyde 3-phosphate and glycerone phosphate from D-glucose: step 3/4. In terms of biological role, catalyzes the phosphorylation of D-fructose 6-phosphate to fructose 1,6-bisphosphate by ATP, the first committing step of glycolysis. This Malacoplasma penetrans (strain HF-2) (Mycoplasma penetrans) protein is Probable ATP-dependent 6-phosphofructokinase (pfkA).